We begin with the raw amino-acid sequence, 325 residues long: Chain length determinant protein (325 aa).

Over 1–31 (MRVENNNVSGQNHDPEQIDLIDLLVQLWRGK) the chain is Cytoplasmic. Residues 32 to 52 (MTIIISVIVAIALAIGYLAVA) form a helical membrane-spanning segment. Over 53 to 294 (KEKWTSTAII…LPIRRDSPKK (242 aa)) the chain is Periplasmic. A helical membrane pass occupies residues 295-315 (AITLILAVLLGGMVGAGIVLG). At 316–325 (RNALRNYNAK) the chain is on the cytoplasmic side.

The protein belongs to the WzzB/Cld/Rol family.

The protein resides in the cell inner membrane. It functions in the pathway bacterial outer membrane biogenesis; lipopolysaccharide biosynthesis. Confers a modal distribution of chain length on the O-antigen component of lipopolysaccharide (LPS). Gives rise to a reduced number of short chain molecules and increases in numbers of longer molecules, with a modal value of 13 (in strain O111/M92) and of 17 (in strain K12). The polypeptide is Chain length determinant protein (wzzB) (Escherichia coli).